The primary structure comprises 643 residues: Pesticidal crystal protein Cry11Aa (643 aa).

It belongs to the delta endotoxin family.

Promotes colloidosmotic lysis by binding to the midgut epithelial cells of mosquitos. The polypeptide is Pesticidal crystal protein Cry11Aa (cry11Aa) (Bacillus thuringiensis subsp. israelensis).